A 541-amino-acid chain; its full sequence is Chaperonin GroEL (541 aa).

Residues 29 to 32 (TLGP), 86 to 90 (DGTTT), Gly-413, and Asp-494 contribute to the ATP site.

The protein belongs to the chaperonin (HSP60) family. In terms of assembly, forms a cylinder of 14 subunits composed of two heptameric rings stacked back-to-back. Interacts with the co-chaperonin GroES.

The protein resides in the cytoplasm. It catalyses the reaction ATP + H2O + a folded polypeptide = ADP + phosphate + an unfolded polypeptide.. Its function is as follows. Together with its co-chaperonin GroES, plays an essential role in assisting protein folding. The GroEL-GroES system forms a nano-cage that allows encapsulation of the non-native substrate proteins and provides a physical environment optimized to promote and accelerate protein folding. This Acetivibrio thermocellus (strain ATCC 27405 / DSM 1237 / JCM 9322 / NBRC 103400 / NCIMB 10682 / NRRL B-4536 / VPI 7372) (Clostridium thermocellum) protein is Chaperonin GroEL.